The sequence spans 519 residues: Dideacetyl fusicoccin A C-19 hydroxylase (519 aa).

The helical transmembrane segment at 16–36 (LPVAPILFTALAATIGAFLLS) threads the bilayer. N177, N327, N414, and N432 each carry an N-linked (GlcNAc...) asparagine glycan. C454 provides a ligand contact to heme.

The protein belongs to the cytochrome P450 family. The cofactor is heme.

The protein resides in the membrane. Its pathway is mycotoxin biosynthesis. Cytochrome P450 monooxygenase; part of the 2 gene clusters that mediate the biosynthesis of fusicoccins, diterpene glucosides that display phytohormone-like activity and function as potent activators of plasma membrane H(+)-ATPases in plants by modifying 14-3-3 proteins and cause the plant disease constriction canker. The first step in the pathway is performed by the fusicoccadiene synthase PaFS that possesses both prenyl transferase and terpene cyclase activity, converting isopentenyl diphosphate and dimethylallyl diphosphate into geranylgeranyl diphosphate (GGDP) and successively converting GGDP into fusicocca-2,10(14)-diene, a precursor for fusicoccin H. The second step is the oxidation at the C-8 position by the cytochrome P450 monooxygenase PaP450-2 to yield fusicocca-2,10(14)-diene-8-beta-ol. The cytochrome P450 monooxygenase PaP450-1 then catalyzes the hydroxylation at the C-16 position to produce fusicocca-2,10(14)-diene-8-beta,16-diol. The dioxygenase fc-dox then catalyzes the 16-oxydation of fusicocca-2,10(14)-diene-8-beta,16-diol to yield an aldehyde (8-beta-hydroxyfusicocca-1,10(14)-dien-16-al). The short-chain dehydrogenase/reductase fc-sdr catalyzes the reduction of the aldehyde to yield fusicocca-1,10(14)-diene-8-beta,16-diol. The next step is the hydroxylation at C-9 performed by the cytochrome P450 monooxygenase PaP450-3 that leads to fusicoccin H aglycon which is glycosylated to fusicoccin H by the O-glycosyltransferase PaGT. Hydroxylation at C-12 by the cytochrome P450 monooxygenase PaP450-4 leads then to the production of fusicoccin Q and is followed by methylation by the O-methyltransferase PaMT to yield fusicoccin P. Fusicoccin P is further converted to fusicoccin J via prenylation by the O-glucose prenyltransferase PaPT. Cytochrome P450 monooxygenase PaP450-5 then performs hydroxylation at C-19 to yield dideacetyl-fusicoccin A which is acetylated to 3'-O-deacetyl-fusicoccin A by the O-acetyltransferase PaAT-2. Finally, a another acetylation by the O-acetyltransferase PaAT-1 yields fusicoccin A. The protein is Dideacetyl fusicoccin A C-19 hydroxylase of Phomopsis amygdali (Fusicoccum amygdali).